Reading from the N-terminus, the 1407-residue chain is DNA-directed RNA polymerase subunit beta' (1407 aa).

C70, C72, C85, and C88 together coordinate Zn(2+). Mg(2+) is bound by residues D460, D462, and D464. Residues C814, C888, C895, and C898 each coordinate Zn(2+). The residue at position 972 (K972) is an N6-acetyllysine.

The protein belongs to the RNA polymerase beta' chain family. As to quaternary structure, the RNAP catalytic core consists of 2 alpha, 1 beta, 1 beta' and 1 omega subunit. When a sigma factor is associated with the core the holoenzyme is formed, which can initiate transcription. The cofactor is Mg(2+). Zn(2+) serves as cofactor.

It carries out the reaction RNA(n) + a ribonucleoside 5'-triphosphate = RNA(n+1) + diphosphate. Its function is as follows. DNA-dependent RNA polymerase catalyzes the transcription of DNA into RNA using the four ribonucleoside triphosphates as substrates. This is DNA-directed RNA polymerase subunit beta' from Escherichia coli (strain SMS-3-5 / SECEC).